We begin with the raw amino-acid sequence, 861 residues long: E3 ubiquitin-protein ligase SH3RF1 (861 aa).

An RING-type zinc finger spans residues 12–53 (CPVCLERLDASAKVLPCQHTFCKRCLLGIVSSRNELRCPECR). 2 SH3 domains span residues 132-191 (PQLP…IIKP) and 194-257 (QPPP…FNSA). The segment at 268–319 (SGVDTGEGSSGTTHSSNSQKQADAKKNTKKRHSFTSLTMSNKSSQSVQNRHS) is disordered. The span at 273–285 (GEGSSGTTHSSNS) shows a compositional bias: low complexity. The segment covering 301 to 317 (FTSLTMSNKSSQSVQNR) has biased composition (polar residues). One can recognise an SH3 3 domain in the interval 435-496 (TRPSVFVAIY…PGNYVAPVTR (62 aa)). A disordered region spans residues 684–731 (NSAANKQDKDSKKEKKGLLKLLSGASTKRKPRSSPPHSPTQELEQTNS). The span at 689 to 700 (KQDKDSKKEKKG) shows a compositional bias: basic and acidic residues. The SH3 4 domain occupies 802 to 861 (RPCERYRVVVSYPPQSEAELELKEGDIVFVHKKREDGWFKGTLQRNGKTGLFPGSFVENI).

Belongs to the SH3RF family. Post-translationally, autoubiquitinated. Ubiquitinated by SH3RF2, leading to proteasome-mediated degradation.

It is found in the cytoplasm. The protein resides in the perinuclear region. The protein localises to the cell projection. Its subcellular location is the lamellipodium. It localises to the golgi apparatus. It is found in the trans-Golgi network. The enzyme catalyses S-ubiquitinyl-[E2 ubiquitin-conjugating enzyme]-L-cysteine + [acceptor protein]-L-lysine = [E2 ubiquitin-conjugating enzyme]-L-cysteine + N(6)-ubiquitinyl-[acceptor protein]-L-lysine.. It functions in the pathway protein modification; protein ubiquitination. Has E3 ubiquitin-protein ligase activity. In the absence of an external substrate, it can catalyze self-ubiquitination. Acts as a scaffold protein that contributes to the effective activation of the JNK signaling pathway. In Xenopus tropicalis (Western clawed frog), this protein is E3 ubiquitin-protein ligase SH3RF1 (sh3rf1).